Here is a 536-residue protein sequence, read N- to C-terminus: Phosphoenolpyruvate carboxykinase (ATP) (536 aa).

Residues arginine 61, tyrosine 195, and lysine 201 each coordinate substrate. Residues lysine 201, histidine 220, and glycine 236–threonine 244 contribute to the ATP site. Mn(2+) is bound by residues lysine 201 and histidine 220. Aspartate 257 lines the Mn(2+) pocket. Positions 285, 322, and 447 each coordinate ATP. Arginine 322 serves as a coordination point for substrate.

It belongs to the phosphoenolpyruvate carboxykinase (ATP) family. Mn(2+) serves as cofactor.

Its subcellular location is the cytoplasm. The catalysed reaction is oxaloacetate + ATP = phosphoenolpyruvate + ADP + CO2. It functions in the pathway carbohydrate biosynthesis; gluconeogenesis. Its function is as follows. Involved in the gluconeogenesis. Catalyzes the conversion of oxaloacetate (OAA) to phosphoenolpyruvate (PEP) through direct phosphoryl transfer between the nucleoside triphosphate and OAA. In Brucella suis biovar 1 (strain 1330), this protein is Phosphoenolpyruvate carboxykinase (ATP).